Here is a 411-residue protein sequence, read N- to C-terminus: Putative odorant receptor 59c (411 aa).

At 1-46 (MTKFFFKRLQTAPLDQEVSSLDASDYYYRIAFFLGWTPPKGALLRW) the chain is on the cytoplasmic side. The helical transmembrane segment at 47–67 (IYSLWTLTTMWLGIVYLPLGL) threads the bilayer. Residues 68–86 (SLTYVKHFDRFTPTEFLTS) are Extracellular-facing. The helical transmembrane segment at 87–107 (LQVDINCIGNVIKSCVTYSQM) threads the bilayer. Residues 108–139 (WRFRRMNELISSLDKRCVTTTQRRIFHKMVAR) lie on the Cytoplasmic side of the membrane. A helical transmembrane segment spans residues 140-160 (VNLIVILFLSTYLGFCFLTLF). Topologically, residues 161-185 (TSVFAGKAPWQLYNPLVDWRKGHWQ) are extracellular. Residues 186-206 (LWIASILEYCVVSIGTMQELM) traverse the membrane as a helical segment. The Cytoplasmic segment spans residues 207 to 271 (SDTYAIVFIS…QIIRPILSIT (65 aa)). Residues 272–292 (IFAQFMLVGIDLGLAAISILF) traverse the membrane as a helical segment. At 293–296 (FPNT) the chain is on the extracellular side. Residues 297–317 (IWTIMANVSFIVAICTESFPC) traverse the membrane as a helical segment. The Cytoplasmic segment spans residues 318 to 369 (CMLCEHLIEDSVHVSNALFHSNWITADRSYKSAVLYFLHRAQQPIQFTAGSI). The helical transmembrane segment at 370–390 (FPISVQSNIAVAKFAFTIITI) threads the bilayer. The Extracellular portion of the chain corresponds to 391 to 411 (VNQMNLGEKFFSDRSNGDINP).

The protein belongs to the insect chemoreceptor superfamily. Heteromeric odorant receptor channel (TC 1.A.69) family. Or2a subfamily. As to quaternary structure, interacts with Orco. Complexes exist early in the endomembrane system in olfactory sensory neurons (OSNs), coupling these complexes to the conserved ciliary trafficking pathway. Expressed in olfactory sensory neurons in the maxillary palp.

The protein resides in the cell membrane. In terms of biological role, odorant receptor which mediates acceptance or avoidance behavior, depending on its substrates. The odorant receptor repertoire encodes a large collection of odor stimuli that vary widely in identity, intensity, and duration. May form a complex with Orco to form odorant-sensing units, providing sensitive and prolonged odorant signaling and calcium permeability. The sequence is that of Putative odorant receptor 59c (Or59c) from Drosophila melanogaster (Fruit fly).